The following is an 81-amino-acid chain: Delta-actitoxin-Aeq2d (81 aa).

The N-terminal stretch at 1–19 is a signal peptide; it reads MNRLMILVFAAVILALASA. Residues 20-25 constitute a propeptide that is removed on maturation; it reads DDVDIA. Disulfide bonds link C31–C78, C33–C68, and C61–C79.

Belongs to the sea anemone sodium channel inhibitory toxin family. Type I subfamily.

Its subcellular location is the secreted. It localises to the nematocyst. Its function is as follows. Binds specifically to voltage-gated sodium channels (Nav), thereby delaying their inactivation during signal transduction. Causes death to crabs. The chain is Delta-actitoxin-Aeq2d from Actinia equina (Beadlet anemone).